The following is a 1012-amino-acid chain: Structural polyprotein (1012 aa).

Residue Asp-30 coordinates a divalent metal cation. A Peptidase S50 domain is found at 513 to 755 (ADKGYEVVAN…AGRQYHLAMA (243 aa)). Residue Ser-652 is the Nucleophile of the active site. Residue Lys-692 is part of the active site. Disordered regions lie at residues 837-857 (GYGV…KDTR) and 968-1012 (TAME…EDLE). Basic residues predominate over residues 975-986 (RNPRRAPPKPKP). The interval 1003 to 1012 (IRTVSDEDLE) is interaction with VP1 protein.

In terms of assembly, homotrimer. A central divalent metal stabilizes the VP2 trimer. Interacts with host ITGA4/ITGB1. As to quaternary structure, homodimer. Interacts (via C-terminus) with VP1 in the cytoplasm. Interacts with VP2. In terms of processing, specific enzymatic cleavages yield mature proteins. The capsid assembly seems to be regulated by polyprotein processing. The protease VP4 cleaves itself off the polyprotein, thus releasing pre-VP2 and VP3 within the infected cell. During capsid assembly, the C-terminus of pre-VP2 is further processed by VP4, giving rise to VP2, the external capsid protein and three small peptides that all stay closely associated with the capsid.

It localises to the virion. The protein localises to the host cytoplasm. Functionally, capsid protein VP2 self assembles to form an icosahedral capsid with a T=13 symmetry, about 70 nm in diameter, and consisting of 260 VP2 trimers. The capsid encapsulates the genomic dsRNA. VP2 is also involved in attachment and entry into the host cell by interacting with host ITGA4/ITGB1. The precursor of VP2 plays an important role in capsid assembly. First, pre-VP2 and VP2 oligomers assemble to form a procapsid. Then, the pre-VP2 intermediates may be processed into VP2 proteins by proteolytic cleavage mediated by VP4 to obtain the mature virion. The final capsid is composed of pentamers and hexamers but VP2 has a natural tendency to assemble into all-pentameric structures. Therefore pre-VP2 may be required to allow formation of the hexameric structures. Its function is as follows. Protease VP4 is a serine protease that cleaves the polyprotein into its final products. Pre-VP2 is first partially cleaved, and may be completely processed by VP4 upon capsid maturation. In terms of biological role, capsid protein VP3 plays a key role in virion assembly by providing a scaffold for the capsid made of VP2. May self-assemble to form a T=4-like icosahedral inner-capsid composed of at least 180 trimers. Plays a role in genomic RNA packaging by recruiting VP1 into the capsid and interacting with the dsRNA genome segments to form a ribonucleoprotein complex. Additionally, the interaction of the VP3 C-terminal tail with VP1 removes the inherent structural blockade of the polymerase active site. Thus, VP3 can also function as a transcriptional activator. Functionally, structural peptide 1 is a small peptide derived from pre-VP2 C-terminus. It destabilizes and perforates cell membranes, suggesting a role during entry. Structural peptide 2 is a small peptide derived from pVP2 C-terminus. It is not essential for the virus viability, but viral growth is affected when missing. Its function is as follows. Structural peptide 3 is a small peptide derived from pVP2 C-terminus. It is not essential for the virus viability, but viral growth is affected when missing. In terms of biological role, structural peptide 4 is a small peptide derived from pVP2 C-terminus. It is essential for the virus viability. This chain is Structural polyprotein, found in Gallus gallus (Chicken).